Here is a 154-residue protein sequence, read N- to C-terminus: MSKINFLPTLQDAYEPLMAAQIDILREQVVAEGGDKASVQSRFNYAWGLIKSESVDDQRLGVKILTDIYKESYQRRRECLYYLTVGCYKLKEYSMAKRYVDTLHEAEPNNKQVIALKEMVEDKIQTETIKGLAMVTGAIVGIASIAGYYMRRRK.

At 1-130 the chain is on the cytoplasmic side; that stretch reads MSKINFLPTL…EDKIQTETIK (130 aa). The chain crosses the membrane as a helical span at residues 131-150; the sequence is GLAMVTGAIVGIASIAGYYM. Topologically, residues 151–154 are mitochondrial intermembrane; that stretch reads RRRK.

Belongs to the FIS1 family.

It is found in the mitochondrion outer membrane. Functionally, has a role in mitochondrial fission. Has a role in outer membrane fission but not matrix separation. This Candida glabrata (strain ATCC 2001 / BCRC 20586 / JCM 3761 / NBRC 0622 / NRRL Y-65 / CBS 138) (Yeast) protein is Mitochondrial fission 1 protein (FIS1).